The primary structure comprises 76 residues: Large ribosomal subunit protein bL31 (76 aa).

The Zn(2+) site is built by Cys-16, Cys-18, Cys-38, and Cys-41.

The protein belongs to the bacterial ribosomal protein bL31 family. Type A subfamily. As to quaternary structure, part of the 50S ribosomal subunit. Zn(2+) is required as a cofactor.

Its function is as follows. Binds the 23S rRNA. In Nocardia farcinica (strain IFM 10152), this protein is Large ribosomal subunit protein bL31.